A 133-amino-acid polypeptide reads, in one-letter code: MNRKLSREKAMELLFGMTLNTDNCEETLGNFIDNYESDIKELDITYIKRILIGVENNKDNIDEAISKNLCNWKIDRISKVNLCILRLAVYELLHDEEIPNRVAINEALEITKKYSDEKSVSFINGVLDNILKK.

Belongs to the NusB family.

Functionally, involved in transcription antitermination. Required for transcription of ribosomal RNA (rRNA) genes. Binds specifically to the boxA antiterminator sequence of the ribosomal RNA (rrn) operons. The protein is Transcription antitermination protein NusB of Clostridium botulinum (strain Alaska E43 / Type E3).